A 394-amino-acid chain; its full sequence is Actin-related protein 2 (394 aa).

At Met-1 the chain carries N-acetylmethionine. ATP is bound by residues 160 to 162 (GDG) and 214 to 218 (RMIKE). N6-acetyllysine is present on Lys-299. 305 to 310 (GGSTMY) is a binding site for ATP. N6-acetyllysine is present on Lys-322.

It belongs to the actin family. ARP2 subfamily. In terms of assembly, component of the Arp2/3 complex composed of ACTR2/ARP2, ACTR3/ARP3, ARPC1B/p41-ARC, ARPC2/p34-ARC, ARPC3/p21-ARC, ARPC4/p20-ARC and ARPC5/p16-ARC. Interacts with AVIL.

The protein localises to the cytoplasm. The protein resides in the cytoskeleton. It is found in the cell projection. Its subcellular location is the nucleus. Its function is as follows. ATP-binding component of the Arp2/3 complex, a multiprotein complex that mediates actin polymerization upon stimulation by nucleation-promoting factor (NPF). The Arp2/3 complex mediates the formation of branched actin networks in the cytoplasm, providing the force for cell motility. Seems to contact the pointed end of the daughter actin filament. In podocytes, required for the formation of lamellipodia downstream of AVIL and PLCE1 regulation. In addition to its role in the cytoplasmic cytoskeleton, the Arp2/3 complex also promotes actin polymerization in the nucleus, thereby regulating gene transcription and repair of damaged DNA. The Arp2/3 complex promotes homologous recombination (HR) repair in response to DNA damage by promoting nuclear actin polymerization, leading to drive motility of double-strand breaks (DSBs). The chain is Actin-related protein 2 (ACTR2) from Pongo abelii (Sumatran orangutan).